A 355-amino-acid chain; its full sequence is GTPase Obg (355 aa).

The 159-residue stretch at 1–159 (MKLVDEAEIL…RLLKLELKLL (159 aa)) folds into the Obg domain. The 183-residue stretch at 160 to 342 (ADVGLLGFPN…IMKDVMAFFD (183 aa)) folds into the OBG-type G domain. GTP contacts are provided by residues 166–173 (GFPNAGKS), 191–195 (FTTLY), 213–216 (DVPG), 292–295 (NKAD), and 323–325 (SAL). Residues S173 and T193 each coordinate Mg(2+).

This sequence belongs to the TRAFAC class OBG-HflX-like GTPase superfamily. OBG GTPase family. Monomer. The cofactor is Mg(2+).

The protein resides in the cytoplasm. In terms of biological role, an essential GTPase which binds GTP, GDP and possibly (p)ppGpp with moderate affinity, with high nucleotide exchange rates and a fairly low GTP hydrolysis rate. Plays a role in control of the cell cycle, stress response, ribosome biogenesis and in those bacteria that undergo differentiation, in morphogenesis control. This Xanthomonas axonopodis pv. citri (strain 306) protein is GTPase Obg.